A 138-amino-acid polypeptide reads, in one-letter code: Cysteine desulfuration protein SufE (138 aa).

Catalysis depends on Cys-51, which acts as the Cysteine persulfide intermediate.

The protein belongs to the SufE family. As to quaternary structure, homodimer. Interacts with SufS.

It localises to the cytoplasm. Its pathway is cofactor biosynthesis; iron-sulfur cluster biosynthesis. Participates in cysteine desulfuration mediated by SufS. Cysteine desulfuration mobilizes sulfur from L-cysteine to yield L-alanine and constitutes an essential step in sulfur metabolism for biosynthesis of a variety of sulfur-containing biomolecules. Functions as a sulfur acceptor for SufS, by mediating the direct transfer of the sulfur atom from the S-sulfanylcysteine of SufS, an intermediate product of cysteine desulfuration process. In Klebsiella pneumoniae (strain 342), this protein is Cysteine desulfuration protein SufE.